Reading from the N-terminus, the 543-residue chain is Chaperonin GroEL (543 aa).

Residues 30–33 (TLGP), lysine 51, 87–91 (DGTTT), glycine 415, 480–482 (DAA), and aspartate 496 contribute to the ATP site.

Belongs to the chaperonin (HSP60) family. In terms of assembly, forms a cylinder of 14 subunits composed of two heptameric rings stacked back-to-back. Interacts with the co-chaperonin GroES.

The protein resides in the cytoplasm. It catalyses the reaction ATP + H2O + a folded polypeptide = ADP + phosphate + an unfolded polypeptide.. Its function is as follows. Together with its co-chaperonin GroES, plays an essential role in assisting protein folding. The GroEL-GroES system forms a nano-cage that allows encapsulation of the non-native substrate proteins and provides a physical environment optimized to promote and accelerate protein folding. This Hydrogenobaculum sp. (strain Y04AAS1) protein is Chaperonin GroEL.